Consider the following 258-residue polypeptide: Glutathione S-transferase DHAR3, chloroplastic (258 aa).

Residues 1–42 constitute a chloroplast transit peptide; that stretch reads MISLRFQPSTTAGVLSASVSRAGFIKRCGSTKPGRVGRFVTM. Cysteine 52 is modified (S-glutathionyl cysteine). Glutathione contacts are provided by lysine 54 and aspartate 65. Residues lysine 54 and aspartate 65 each coordinate L-ascorbate. Positions 56–129 constitute a GST N-terminal domain; it reads SITTPNKLGD…DVITQALEEK (74 aa). Cysteine 66 acts as the Nucleophile in catalysis. Cysteines 66 and 69 form a disulfide. The short motif at 66 to 71 is the Glutathione-binding element; the sequence is CPFCQK. Residues lysine 93, valine 106, serine 119, histidine 205, and tryptophan 252 each coordinate glutathione. The region spanning 130–258 is the GST C-terminal domain; it reads YPEPPLATPP…IAGWRPKVMG (129 aa). Lysine 255 contributes to the L-ascorbate binding site.

Belongs to the GST superfamily. DHAR family. In terms of assembly, monomer. Interacts with TRX3. In terms of processing, partial S-glutathionylation and intramolecular disulfide bond formation between Cys-66 and Cys-69 in the presence of oxidized glutathione (GSSG). Could be reduced by TRX-dependent process.

It localises to the plastid. The protein resides in the chloroplast stroma. The enzyme catalyses RX + glutathione = an S-substituted glutathione + a halide anion + H(+). It catalyses the reaction L-dehydroascorbate + 2 glutathione = glutathione disulfide + L-ascorbate. In terms of biological role, displays a dual function. As a soluble protein, exhibits glutathione-dependent thiol transferase and dehydroascorbate (DHA) reductase activities. Key component of the ascorbate recycling system. Involved in the redox homeostasis, especially in scavenging of ROS under oxidative stresses. The sequence is that of Glutathione S-transferase DHAR3, chloroplastic (DHAR3) from Arabidopsis thaliana (Mouse-ear cress).